Reading from the N-terminus, the 87-residue chain is MTIKKFLPLLLSSLMVYSLILLPIISGKSPVSCDGACTSTPQCNKICTSKGYKKGICHGSAHLFYICCCYAKFESQYDPSISSPPNY.

Residues 1–27 (MTIKKFLPLLLSSLMVYSLILLPIISG) form the signal peptide. Cystine bridges form between Cys-33–Cys-69, Cys-37–Cys-57, Cys-43–Cys-67, and Cys-47–Cys-68.

Belongs to the DEFL family.

The protein resides in the secreted. The polypeptide is Defensin-like protein 81 (Arabidopsis thaliana (Mouse-ear cress)).